The following is a 364-amino-acid chain: UDP-N-acetylglucosamine--N-acetylmuramyl-(pentapeptide) pyrophosphoryl-undecaprenol N-acetylglucosamine transferase (364 aa).

Residues 10–12 (TGG), Asn124, Arg165, Ser193, Ile248, and Gln293 each bind UDP-N-acetyl-alpha-D-glucosamine.

This sequence belongs to the glycosyltransferase 28 family. MurG subfamily.

It localises to the cell inner membrane. The catalysed reaction is di-trans,octa-cis-undecaprenyl diphospho-N-acetyl-alpha-D-muramoyl-L-alanyl-D-glutamyl-meso-2,6-diaminopimeloyl-D-alanyl-D-alanine + UDP-N-acetyl-alpha-D-glucosamine = di-trans,octa-cis-undecaprenyl diphospho-[N-acetyl-alpha-D-glucosaminyl-(1-&gt;4)]-N-acetyl-alpha-D-muramoyl-L-alanyl-D-glutamyl-meso-2,6-diaminopimeloyl-D-alanyl-D-alanine + UDP + H(+). Its pathway is cell wall biogenesis; peptidoglycan biosynthesis. Cell wall formation. Catalyzes the transfer of a GlcNAc subunit on undecaprenyl-pyrophosphoryl-MurNAc-pentapeptide (lipid intermediate I) to form undecaprenyl-pyrophosphoryl-MurNAc-(pentapeptide)GlcNAc (lipid intermediate II). The sequence is that of UDP-N-acetylglucosamine--N-acetylmuramyl-(pentapeptide) pyrophosphoryl-undecaprenol N-acetylglucosamine transferase from Geobacter sulfurreducens (strain ATCC 51573 / DSM 12127 / PCA).